We begin with the raw amino-acid sequence, 275 residues long: Tryptase (275 aa).

Positions 1–20 (MLNLLVLALPLLVSLVHTAP) are cleaved as a signal peptide. A propeptide spans 21–30 (APGQALERAG) (activation peptide). A Peptidase S1 domain is found at 31–272 (IVGGKEAPGH…YLDWIHQCIP (242 aa)). C59 and C75 form a disulfide bridge. Catalysis depends on charge relay system residues H74 and D121. N-linked (GlcNAc...) asparagine glycosylation occurs at N132. 3 disulfides stabilise this stretch: C155–C230, C188–C211, and C220–C248. Catalysis depends on S224, which acts as the Charge relay system. The N-linked (GlcNAc...) asparagine glycan is linked to N233.

The protein belongs to the peptidase S1 family. Tryptase subfamily. In terms of assembly, homotetramer.

It is found in the secreted. The enzyme catalyses Preferential cleavage: Arg-|-Xaa, Lys-|-Xaa, but with more restricted specificity than trypsin.. In terms of biological role, tryptase is the major neutral protease present in mast cells and is secreted upon the coupled activation-degranulation response of this cell type. The protein is Tryptase (MCT7) of Sus scrofa (Pig).